Here is a 456-residue protein sequence, read N- to C-terminus: Choline kinase (456 aa).

The protein belongs to the choline/ethanolamine kinase family. Monomer. Mg(2+) serves as cofactor.

It is found in the cytoplasm. It localises to the nucleus. It carries out the reaction choline + ATP = phosphocholine + ADP + H(+). It participates in phospholipid metabolism; phosphatidylcholine biosynthesis; phosphocholine from choline: step 1/1. Its function is as follows. Catalyzes the committed step in the synthesis of phosphatidylcholine by the CDP-choline pathway. The sequence is that of Choline kinase from Schizosaccharomyces pombe (strain 972 / ATCC 24843) (Fission yeast).